The primary structure comprises 551 residues: MITVSEVSSYSSSSSNFASLSRLNHKSSSRLRSSSLYKGSFFSVSTKTRRNTCKAKSWNLGLVINSRSSEASVFDPLGINPDETSGLSSIWESFVSLLSPSFESSSGNRRDKPSSGRGVAAAIEDSSIDFGDFFKGPLPGKFLKLLGFLALSRLGIYIPLGGVNREAFVGNLDQNSILSTLDTFSGGGIGRLGICSLGIVPFINAQIVFQLLAQVYPKLQDLQKKEGEAGRKKILQYTRYASVGFAIVQAIGQVFYLRPYVNDFSTEWVVSSVTLLTLGSVLTTYIGERISDLKLGNGTSLLIFTSIISYLPASFGRTTAEALQEGNYTGLGTIVVSFLLLVLGIVYVQEAERKIPLNYASRYTSKAGGLQKSAYLPFKVNSAGVMPIIFSTSSLALPATLARFTGISALKNVAFALTPGGSFYLPTNILLIAFFNYYYTFLQLDPDDVSEQLKRQGASIPLVRPGKSTALFIKTVLGRISVLGSAFLAVLAAGPAVVEQITHLTAFRGFAGTSVLILVGCATDTARKVQAEIISQKYKNIEFYELDKYDP.

The N-terminal 67 residues, 1 to 67, are a transit peptide targeting the chloroplast; that stretch reads MITVSEVSSY…WNLGLVINSR (67 aa). 10 helical membrane-spanning segments follow: residues 142–162, 192–212, 241–261, 268–288, 295–315, 328–348, 382–402, 415–435, 482–502, and 503–523; these read FLKLLGFLALSRLGIYIPLGG, LGICSLGIVPFINAQIVFQLL, ASVGFAIVQAIGQVFYLRPYV, WVVSSVTLLTLGSVLTTYIGE, LGNGTSLLIFTSIISYLPASF, YTGLGTIVVSFLLLVLGIVYV, SAGVMPIIFSTSSLALPATLA, FALTPGGSFYLPTNILLIAFF, VLGSAFLAVLAAGPAVVEQIT, and HLTAFRGFAGTSVLILVGCAT.

It belongs to the SecY/SEC61-alpha family. Part of the Sec protein translocation apparatus. Interacts with SECE1, ALB3 and probably with SECA1.

Its subcellular location is the plastid. The protein resides in the chloroplast thylakoid membrane. Its function is as follows. Involved in protein export. Probably interacts with other proteins to allow the translocation of proteins across the chloroplast thylakoid membranes. Required for normal greening during embryogenesis. Central subunit of the protein translocation channel SecYE. Consists of two halves formed by TMs 1-5 and 6-10. These two domains form a lateral gate at the front which open onto the bilayer between TMs 2 and 7, and are clamped together by SecE at the back. The channel is closed by both a pore ring composed of hydrophobic SecY resides and a short helix (helix 2A) on the extracellular side of the membrane which forms a plug. The polypeptide is Preprotein translocase subunit SCY1, chloroplastic (SCY1) (Arabidopsis thaliana (Mouse-ear cress)).